The sequence spans 296 residues: Enoyl-CoA hydratase ACTT3 (296 aa).

Residues 294–296 (PKL) carry the Peroxisomal targeting signal type 1 motif.

The protein belongs to the enoyl-CoA hydratase/isomerase family.

The protein localises to the peroxisome. It catalyses the reaction a (3S)-3-hydroxyacyl-CoA = a (2E)-enoyl-CoA + H2O. It carries out the reaction a 4-saturated-(3S)-3-hydroxyacyl-CoA = a (3E)-enoyl-CoA + H2O. It participates in mycotoxin biosynthesis. Its function is as follows. Enoyl-CoA hydratase; part of the gene clusters that mediate the biosynthesis of the host-selective toxins (HSTs) ACT-toxins responsible for brown spot of tangerine disease by the tangerine pathotype which affects tangerines and mandarins. ACT-toxins consist of three moieties, 9,10-epoxy-8-hydroxy-9-methyl-decatrienoic acid (EDA), valine and a polyketide. ACT-toxin I is toxic to both citrus and pear; toxin II the 5''-deoxy derivative of ACT-toxin I, is highly toxic to pear and slightly toxic to citrus. On cellular level, ACT-toxins affect plasma membrane of susceptible cells and cause a sudden increase in loss of K(+) after a few minutes of toxin treatment. The acyl-CoA ligase ACTT1, the hydrolase ACTT2, the enoyl-CoA hydratases ACTT3 and ACTT6, and the acyl-CoA synthetase ACTT5 are all involved in the biosynthesis of the AK-, AF- and ACT-toxin common 9,10-epoxy-8-hydroxy-9-methyl-decatrienoic acid (EDA) structural moiety. The exact role of each enzyme, and of additional enzymes identified within the AF-toxin clusters have still to be determined. On the other hand, ACTTS1 to ACTTS4 are specific to the tangerine pathotype. The function of ACTTS3 is to elongate the polyketide chain portion of ACT-toxin that is unique to this toxin. The enoyl-reductase ACTTS2 might complement the missing enoyl-reductase (ER) domain in ACTTS3 in the synthesis of the polyketide portion of ACT-toxin. The roles of the nonribosomal peptide synthetases-related proteins ACTTS1 and ACTTS4 have also still not been elucidated. In Alternaria alternata (Alternaria rot fungus), this protein is Enoyl-CoA hydratase ACTT3.